The following is a 501-amino-acid chain: ADP,ATP carrier protein 3 (501 aa).

The next 12 membrane-spanning stretches (helical) occupy residues 23–43 (LKLF…FGAL), 59–79 (IISF…TILY), 90–110 (YIFY…AYII), 146–166 (YALM…LMFW), 183–203 (PVLG…LVFF), 227–247 (IMLQ…MFLF), 293–313 (IALL…PWKA), 326–346 (VNFM…FMII), 361–381 (LLTP…IIFI), 383–403 (EIGT…VGAI), 446–466 (FGKS…PTAT), and 470–490 (IIIY…WNII).

It belongs to the ADP/ATP translocase tlc family.

Its subcellular location is the cell membrane. Its function is as follows. Provides the rickettsial cell with host ATP in exchange for rickettsial ADP. This is an obligate exchange system. This energy acquiring activity is an important component of rickettsial parasitism. This chain is ADP,ATP carrier protein 3 (tlcC), found in Rickettsia prowazekii (strain Madrid E).